Consider the following 475-residue polypeptide: Aspartyl/glutamyl-tRNA(Asn/Gln) amidotransferase subunit B (475 aa).

It belongs to the GatB/GatE family. GatB subfamily. Heterotrimer of A, B and C subunits.

It catalyses the reaction L-glutamyl-tRNA(Gln) + L-glutamine + ATP + H2O = L-glutaminyl-tRNA(Gln) + L-glutamate + ADP + phosphate + H(+). The catalysed reaction is L-aspartyl-tRNA(Asn) + L-glutamine + ATP + H2O = L-asparaginyl-tRNA(Asn) + L-glutamate + ADP + phosphate + 2 H(+). Functionally, allows the formation of correctly charged Asn-tRNA(Asn) or Gln-tRNA(Gln) through the transamidation of misacylated Asp-tRNA(Asn) or Glu-tRNA(Gln) in organisms which lack either or both of asparaginyl-tRNA or glutaminyl-tRNA synthetases. The reaction takes place in the presence of glutamine and ATP through an activated phospho-Asp-tRNA(Asn) or phospho-Glu-tRNA(Gln). This chain is Aspartyl/glutamyl-tRNA(Asn/Gln) amidotransferase subunit B, found in Bacillus cereus (strain ATCC 10987 / NRS 248).